The following is a 1073-amino-acid chain: Guanylyl cyclase C (1073 aa).

Positions 1 to 23 (MKTPLLALALWSLLLQLGLTFWP) are cleaved as a signal peptide. At 24-433 (SSVSQNCHNG…IPGRGPQILM (410 aa)) the chain is on the extracellular side. N-linked (GlcNAc...) asparagine glycans are attached at residues Asn32, Asn43, Asn79, Asn195, Asn284, Asn307, and Asn402. A helical membrane pass occupies residues 434-454 (IAVFTLTGTIVLLLLIALLVL). The Cytoplasmic segment spans residues 455 to 1073 (RKYKREYALR…NTTDNESTHF (619 aa)). The Protein kinase domain maps to 489–749 (LKIDDDRRRD…KIENTLAKIF (261 aa)). One can recognise a Guanylate cyclase domain in the interval 824–954 (TIYFSDIVGF…DTVNTASRME (131 aa)).

Belongs to the adenylyl cyclase class-4/guanylyl cyclase family. As to quaternary structure, homotrimer. Interacts via its C-terminal region with NHERF4. Interacts with the lectin chaperone VIP36. Post-translationally, glycosylation at Asn-79 is required for interaction with VIP36 while glycosylation at Asn-402 modulates ligand-mediated GC-C activation.

It localises to the cell membrane. It is found in the endoplasmic reticulum membrane. The catalysed reaction is GTP = 3',5'-cyclic GMP + diphosphate. In terms of biological role, guanylyl cyclase that catalyzes synthesis of cyclic GMP (cGMP) from GTP. The polypeptide is Guanylyl cyclase C (GUCY2C) (Sus scrofa (Pig)).